A 151-amino-acid polypeptide reads, in one-letter code: Sec-independent protein translocase protein TatB (151 aa).

The helical transmembrane segment at 1–21 (MFGMSLPEIIIIAVIAVIFLG) threads the bilayer. Residues 120–131 (NNDPLNNETLNE) are compositionally biased toward low complexity. The disordered stretch occupies residues 120 to 151 (NNDPLNNETLNEQPSKPSPNLNLENKEIKKEA). Over residues 132–142 (QPSKPSPNLNL) the composition is skewed to polar residues.

This sequence belongs to the TatB family. As to quaternary structure, the Tat system comprises two distinct complexes: a TatABC complex, containing multiple copies of TatA, TatB and TatC subunits, and a separate TatA complex, containing only TatA subunits. Substrates initially bind to the TatABC complex, which probably triggers association of the separate TatA complex to form the active translocon.

It is found in the cell inner membrane. Part of the twin-arginine translocation (Tat) system that transports large folded proteins containing a characteristic twin-arginine motif in their signal peptide across membranes. Together with TatC, TatB is part of a receptor directly interacting with Tat signal peptides. TatB may form an oligomeric binding site that transiently accommodates folded Tat precursor proteins before their translocation. This Campylobacter fetus subsp. fetus (strain 82-40) protein is Sec-independent protein translocase protein TatB.